The following is a 97-amino-acid chain: Citrate lyase acyl carrier protein (97 aa).

S14 is modified (O-(phosphoribosyl dephospho-coenzyme A)serine).

Belongs to the CitD family. Oligomer with a subunit composition of (alpha,beta,gamma)6.

Its subcellular location is the cytoplasm. Functionally, covalent carrier of the coenzyme of citrate lyase. In Lactobacillus acidophilus (strain ATCC 700396 / NCK56 / N2 / NCFM), this protein is Citrate lyase acyl carrier protein.